We begin with the raw amino-acid sequence, 250 residues long: Histone H1.2 (250 aa).

A compositionally biased stretch (polar residues) spans 1–11 (MSDSAVATSAS). Disordered regions lie at residues 1–53 (MSDS…QMVD) and 101–250 (KLIQ…ATKK). Over residues 27–42 (KKAAATPKSKKSTAAP) the composition is skewed to low complexity. The 75-residue stretch at 44 to 118 (SHPPTQQMVD…GASGSFKLSR (75 aa)) folds into the H15 domain. The span at 120–133 (AKKDPKPKASAVEK) shows a compositional bias: basic and acidic residues. Residues 151–161 (STSTTKKAAGA) show a composition bias toward low complexity. Over residues 174 to 191 (KSVEKKRADKAKAKDAKK) the composition is skewed to basic and acidic residues. A compositionally biased stretch (low complexity) spans 192–211 (TGTIKAKPTTAKAKSSATKP). 2 stretches are compositionally biased toward basic residues: residues 212–225 (KTPK…KPKK) and 235–250 (TAVK…ATKK).

This sequence belongs to the histone H1/H5 family.

The protein localises to the nucleus. The protein resides in the chromosome. Functionally, histones H1 are necessary for the condensation of nucleosome chains into higher-order structures. This is Histone H1.2 (His1.2) from Drosophila virilis (Fruit fly).